We begin with the raw amino-acid sequence, 273 residues long: NH(3)-dependent NAD(+) synthetase (273 aa).

Gly47 to Ser54 contributes to the ATP binding site. Asp53 contacts Mg(2+). Residue Arg139 participates in deamido-NAD(+) binding. Position 159 (Thr159) interacts with ATP. A Mg(2+)-binding site is contributed by Glu164. Positions 172 and 179 each coordinate deamido-NAD(+). Residues Lys188 and Thr210 each contribute to the ATP site. His259–Lys260 contributes to the deamido-NAD(+) binding site.

This sequence belongs to the NAD synthetase family. In terms of assembly, homodimer.

The catalysed reaction is deamido-NAD(+) + NH4(+) + ATP = AMP + diphosphate + NAD(+) + H(+). It functions in the pathway cofactor biosynthesis; NAD(+) biosynthesis; NAD(+) from deamido-NAD(+) (ammonia route): step 1/1. Functionally, catalyzes the ATP-dependent amidation of deamido-NAD to form NAD. Uses ammonia as a nitrogen source. This Staphylococcus saprophyticus subsp. saprophyticus (strain ATCC 15305 / DSM 20229 / NCIMB 8711 / NCTC 7292 / S-41) protein is NH(3)-dependent NAD(+) synthetase.